The following is a 314-amino-acid chain: MSGRDISVAIQYPGSRVNRITYPLSKTNIEYEVSADNPFDFDIVLLDCPGLNVLKPLAKAKFSSVPVVYRVQGDVLRAFQEMNYTNFKYRSAKYLFSHLDGAIPIEPVLGRRFSNVTGVRNIGTATLAKSEKYWPNAKHWDESLRLISVTNVNYIGKVQPMVDYAPYISRFLQRNGGHWNIYGKGRLAGYLQDNLGGYDNISYCGYAEDIKSRYANSNCMLHLSNFDSLPNAILEGFASNLPVITNPFSVFSDYHGPIEVTELKKIDAKLCSMQDPTTRRIKARQGQEYLKAKHTPEIVGEQYSVVFRSVLNDC.

Belongs to the glycosyltransferase group 1 family.

This is Putative glycosyltransferase ORF31 from Haloarcula hispanica (His1V).